A 138-amino-acid polypeptide reads, in one-letter code: Transcriptional activator protein Pur-alpha (138 aa).

Serine 70 bears the Phosphoserine mark.

This sequence belongs to the PUR DNA-binding protein family. In terms of assembly, homodimer, heterodimer with PURB and heterotrimer with PURB and YBX1/Y-box protein 1. Interacts with FMR1; this interaction occurs in association with polyribosome.

The protein localises to the nucleus. Functionally, this is a probable transcription activator that specifically binds the purine-rich single strand of the PUR element located upstream of the c-Myc gene. May play a role in the initiation of DNA replication and in recombination. The polypeptide is Transcriptional activator protein Pur-alpha (Rattus norvegicus (Rat)).